A 232-amino-acid chain; its full sequence is Zinc import ATP-binding protein ZnuC (232 aa).

The ABC transporter domain occupies 5–220 (VNLKNIFVFY…PSFIEMFGCY (216 aa)). An ATP-binding site is contributed by 37 to 44 (GPNGSGKS).

It belongs to the ABC transporter superfamily. Zinc importer (TC 3.A.1.15.5) family. The complex is composed of two ATP-binding proteins (ZnuC), two transmembrane proteins (ZnuB) and a solute-binding protein (ZnuA).

Its subcellular location is the cell membrane. It carries out the reaction Zn(2+)(out) + ATP(in) + H2O(in) = Zn(2+)(in) + ADP(in) + phosphate(in) + H(+)(in). Functionally, part of the ABC transporter complex ZnuABC involved in zinc import. Responsible for energy coupling to the transport system. In Wigglesworthia glossinidia brevipalpis, this protein is Zinc import ATP-binding protein ZnuC.